The sequence spans 443 residues: 3-phosphoshikimate 1-carboxyvinyltransferase (443 aa).

3-phosphoshikimate-binding residues include Lys24, Ser25, and Arg29. Lys24 contributes to the phosphoenolpyruvate binding site. The phosphoenolpyruvate site is built by Gly95 and Arg123. 3-phosphoshikimate is bound by residues Ser167, Gln169, Asp323, and Lys350. Gln169 contacts phosphoenolpyruvate. Asp323 functions as the Proton acceptor in the catalytic mechanism. 2 residues coordinate phosphoenolpyruvate: Arg354 and Arg398.

The protein belongs to the EPSP synthase family. As to quaternary structure, monomer.

It is found in the cytoplasm. The enzyme catalyses 3-phosphoshikimate + phosphoenolpyruvate = 5-O-(1-carboxyvinyl)-3-phosphoshikimate + phosphate. It functions in the pathway metabolic intermediate biosynthesis; chorismate biosynthesis; chorismate from D-erythrose 4-phosphate and phosphoenolpyruvate: step 6/7. Its function is as follows. Catalyzes the transfer of the enolpyruvyl moiety of phosphoenolpyruvate (PEP) to the 5-hydroxyl of shikimate-3-phosphate (S3P) to produce enolpyruvyl shikimate-3-phosphate and inorganic phosphate. The polypeptide is 3-phosphoshikimate 1-carboxyvinyltransferase (Caulobacter vibrioides (strain ATCC 19089 / CIP 103742 / CB 15) (Caulobacter crescentus)).